We begin with the raw amino-acid sequence, 32 residues long: Ranatuerin-3 (32 aa).

The cysteines at positions 23 and 28 are disulfide-linked.

It belongs to the frog skin active peptide (FSAP) family. Ranatuerin subfamily. As to expression, expressed by the skin glands.

Its subcellular location is the secreted. Antibacterial activity against Gram-positive bacterium S.aureus (MIC=60 uM). Shows no detectable hemolytic activity towards human erythrocytes. In Aquarana catesbeiana (American bullfrog), this protein is Ranatuerin-3.